Consider the following 447-residue polypeptide: MANDIESKVIKAKKASIELASVSSEVKNRALEAMAEALDKERKIILEANLKDLEYAAQLKKAGKLTQALVDRLKVTDSKVDGMIAGIRDVIKLKDPVGETLSTLELDDDLILYQVSCPIGLIGVIFESRPDVVPQVMSLCLKSGNATIFKGGSEARESNRTIFDILVRAIESTGGMPEGAFQLMETREEIMSLLSLDAYVDLLIPRGSNEFVKFIQDNTKIPVLGHTSGICHIYVDEFADPDTAWQVCFDAKVQYPAVCNAIETLLVNRNIAEVFLPKMAEMYLKAGVELRCDEGSYSLLSEKGLSPLSRATDEDWSLEYNDLILSIKLVDTIKEAVDHINTFGSHHTDGIITENASRRKEFIGLVDSSSVMVNASTRFADGYRYGKGAEVGISTNKIHSRGPVGMEGLLIYKYILMGKGQVVADYAGKNAKPYTHRKLDLKFEDVN.

The protein belongs to the gamma-glutamyl phosphate reductase family.

The protein resides in the cytoplasm. The enzyme catalyses L-glutamate 5-semialdehyde + phosphate + NADP(+) = L-glutamyl 5-phosphate + NADPH + H(+). It functions in the pathway amino-acid biosynthesis; L-proline biosynthesis; L-glutamate 5-semialdehyde from L-glutamate: step 2/2. In terms of biological role, catalyzes the NADPH-dependent reduction of L-glutamate 5-phosphate into L-glutamate 5-semialdehyde and phosphate. The product spontaneously undergoes cyclization to form 1-pyrroline-5-carboxylate. The sequence is that of Gamma-glutamyl phosphate reductase from Methanosarcina mazei (strain ATCC BAA-159 / DSM 3647 / Goe1 / Go1 / JCM 11833 / OCM 88) (Methanosarcina frisia).